A 502-amino-acid chain; its full sequence is High affinity nitrate transporter 2.5 (502 aa).

The next 12 helical transmembrane spans lie at 51-71 (WFQFFCCFVSTFAAPPLLPVI), 87-107 (IASVSGAVFARIVMGTACDLF), 111-131 (LASAALTLSTAPAVYFTAGIK), 133-153 (PIGFIMVRFFAGFSLATFVST), 172-192 (IAAGWGNLGGGATQLIMPIVF), 208-228 (IAFFIPGLFQTLSAFAVLLFG), 264-284 (WITALAYGYCFGVELTIDNII), 300-320 (GIIAASFGLANFFARPGGGIF), 334-354 (LWAWWIVQTSGGVLCACLGQI), 361-381 (IIVMLVFSVFVQAACGLTFGV), 393-413 (VSGMTGAGGNVGAVLTQLIFF), and 423-443 (GITLMGVMSIACSLPICLIYF). The interval 477 to 502 (LHIGSQKFAETSISERGRATTTHPQT) is disordered.

It belongs to the major facilitator superfamily. Nitrate/nitrite porter (TC 2.A.1.8) family. As to quaternary structure, oligomeric molecular complex with NRT3.1. As to expression, expressed in roots, shoots and seeds. Expressed in leaves. Expressed in root hair zone of the primary root and the lateral roots, but not in the lateral root tip or in older parts of the roots. Detected mainly in the epidermis and the cortex. Expressed in shoots only in higher-order veins.

The protein localises to the cell membrane. Its function is as follows. Nitrate transporter involved in the constitutive high-affinity transport system (cHATS) under long-term N starvation conditions. Predominantly expressed in roots of nitrate-deprived plants as a 150 kDa molecular complex with NRT3.1 representing the major contributor to cHATS influx. The principal role of this cHATS is to enable roots previously deprived of nitrate to absorb this ion and initiate induction of nitrate-inducible genes. Not involved in transfer of nitrate from roots to shoots. Contributes to phloem loading of nitrate in shoots during N starvation, but not required for growth and nitrate uptake in young plants. Required for the nitrate uptake-independent plant growth promotion and lateral root response to the rhizospheric Phyllobacterium. Might be involved in the transfer of nitrate from stored pools to cytoplasm. The protein is High affinity nitrate transporter 2.5 (NRT2.5) of Arabidopsis thaliana (Mouse-ear cress).